The sequence spans 398 residues: Cap-specific mRNA (nucleoside-2'-O-)-methyltransferase 1 (398 aa).

One can recognise a RrmJ-type SAM-dependent 2'-O-MTase domain in the interval 85–298 (QFSNRAGHKL…ERYLVCVDFL (214 aa)). S-adenosyl-L-methionine-binding residues include glycine 132 and aspartate 211. Lysine 252 acts as the Proton acceptor in catalysis. The disordered stretch occupies residues 371–398 (LKAKETTTRTSAESDDSPLSSRESCKDG).

The catalysed reaction is a 5'-end (N(7)-methyl 5'-triphosphoguanosine)-ribonucleoside in mRNA + S-adenosyl-L-methionine = a 5'-end (N(7)-methyl 5'-triphosphoguanosine)-(2'-O-methyl-ribonucleoside) in mRNA + S-adenosyl-L-homocysteine + H(+). Functionally, S-adenosyl-L-methionine-dependent methyltransferase that mediates RNA cap1 2'-O-ribose methylation to the 5'-cap structure of RNAs. Methylates the ribose of the first nucleotide of a m(7)GpppG-capped mRNA to produce m(7)GpppNmp (cap1). The protein is Cap-specific mRNA (nucleoside-2'-O-)-methyltransferase 1 of Leishmania braziliensis.